A 57-amino-acid polypeptide reads, in one-letter code: UPF0391 membrane protein RB0084 (57 aa).

The next 2 helical transmembrane spans lie at 4–24 and 33–53; these read WALIFFVISLIAGFLGFSGVS and ILFYIAVIIFLVFLVLALAVG.

It belongs to the UPF0391 family.

It localises to the cell membrane. The chain is UPF0391 membrane protein RB0084 from Rhizobium meliloti (strain 1021) (Ensifer meliloti).